Consider the following 466-residue polypeptide: Fumarate hydratase class II (466 aa).

Substrate contacts are provided by residues 99–101 (SGT), 129–132 (HPND), 139–141 (SSN), and T187. The Proton donor/acceptor role is filled by H188. S318 is a catalytic residue. Substrate is bound by residues S319 and 324–326 (KVN).

This sequence belongs to the class-II fumarase/aspartase family. Fumarase subfamily. Homotetramer.

It localises to the cytoplasm. The catalysed reaction is (S)-malate = fumarate + H2O. It functions in the pathway carbohydrate metabolism; tricarboxylic acid cycle; (S)-malate from fumarate: step 1/1. Involved in the TCA cycle. Catalyzes the stereospecific interconversion of fumarate to L-malate. This chain is Fumarate hydratase class II, found in Thermus aquaticus.